A 388-amino-acid chain; its full sequence is Diphosphomevalonate decarboxylase (388 aa).

(R)-5-diphosphomevalonate-binding positions include 19 to 22 (YWGK), R74, 153 to 158 (SGSACR), and T209. Positions 367-388 (QGPQGSSESLINDKGLPKAVAN) are disordered.

Belongs to the diphosphomevalonate decarboxylase family. In terms of assembly, homodimer.

It carries out the reaction (R)-5-diphosphomevalonate + ATP = isopentenyl diphosphate + ADP + phosphate + CO2. The protein operates within isoprenoid biosynthesis; isopentenyl diphosphate biosynthesis via mevalonate pathway; isopentenyl diphosphate from (R)-mevalonate: step 3/3. Functionally, diphosphomevalonate decarboxylase; part of the second module of ergosterol biosynthesis pathway that includes the middle steps of the pathway. The second module is carried out in the vacuole and involves the formation of farnesyl diphosphate, which is also an important intermediate in the biosynthesis of ubiquinone, dolichol, heme and prenylated proteins. Activity by the mevalonate kinase ERG12 first converts mevalonate into 5-phosphomevalonate. 5-phosphomevalonate is then further converted to 5-diphosphomevalonate by the phosphomevalonate kinase ERG8. The diphosphomevalonate decarboxylase MVD1/ERG19 then produces isopentenyl diphosphate. The isopentenyl-diphosphate delta-isomerase IDI1 then catalyzes the 1,3-allylic rearrangement of the homoallylic substrate isopentenyl (IPP) to its highly electrophilic allylic isomer, dimethylallyl diphosphate (DMAPP). Finally the farnesyl diphosphate synthase ERG20 catalyzes the sequential condensation of isopentenyl pyrophosphate with dimethylallyl pyrophosphate, and then with the resultant geranylpyrophosphate to the ultimate product farnesyl pyrophosphate. This Debaryomyces hansenii (strain ATCC 36239 / CBS 767 / BCRC 21394 / JCM 1990 / NBRC 0083 / IGC 2968) (Yeast) protein is Diphosphomevalonate decarboxylase.